Consider the following 112-residue polypeptide: Peptidyl-tRNA hydrolase (112 aa).

The interval 64-99 (EEAKRAGLPTGLISDAGRTQLEPGTPTALAIGPAPD) is disordered.

Belongs to the PTH2 family.

It is found in the cytoplasm. The catalysed reaction is an N-acyl-L-alpha-aminoacyl-tRNA + H2O = an N-acyl-L-amino acid + a tRNA + H(+). In terms of biological role, the natural substrate for this enzyme may be peptidyl-tRNAs which drop off the ribosome during protein synthesis. This Halobacterium salinarum (strain ATCC 29341 / DSM 671 / R1) protein is Peptidyl-tRNA hydrolase.